Consider the following 939-residue polypeptide: Serine/threonine-protein kinase STE20 (939 aa).

A disordered region spans residues 1 to 87 (MSNDPSAVSE…TNDDDNNVVS (87 aa)). Serine 2 bears the N-acetylserine mark. A compositionally biased stretch (polar residues) spans 44 to 57 (TTGTLNVNALQKGT). 2 positions are modified to phosphoserine: serine 87 and serine 165. A Phosphothreonine modification is found at threonine 167. The residue at position 169 (serine 169) is a Phosphoserine. Residues 176–196 (NATVKHQQPVASSTVNSNKSS) are compositionally biased toward polar residues. Disordered stretches follow at residues 176–299 (NATV…LRMK) and 311–331 (RNSQ…SSSI). Residue threonine 203 is modified to Phosphothreonine. Positions 204–231 (PVSTPVISKPSMTTTPRQINSASHSLSN) are enriched in polar residues. Residues 232–243 (PKHKQHKPKVKP) show a composition bias toward basic residues. Composition is skewed to low complexity over residues 251–283 (KPVS…YSSS) and 320–330 (SSSSNNSSSSS). In terms of domain architecture, CRIB spans 337–350 (ISTPYNAKHIHHVG). Disordered regions lie at residues 407–487 (KTFN…SASA) and 500–598 (NVSP…ERER). Polar residues-rich tracts occupy residues 408–467 (TFNT…SSAN) and 500–527 (NVSP…SRNA). Residue serine 418 is modified to Phosphoserine. Positions 434–499 (PSTSDSHNYG…IKSPVMNSAA (66 aa)) are BEM1-binding. 3 positions are modified to phosphoserine: serine 502, serine 547, and serine 562. The segment covering 542-552 (TKSKTSPIIST) has biased composition (low complexity). The segment covering 569-578 (ETVTTPTSKP) has biased composition (polar residues). A Phosphothreonine modification is found at threonine 573. The segment covering 584 to 597 (LSKELNEKKREERE) has biased composition (basic and acidic residues). The residue at position 585 (serine 585) is a Phosphoserine. Residues 620 to 871 (YANLVKIGQG…ATELLHDEYI (252 aa)) form the Protein kinase domain. ATP is bound by residues 626–634 (IGQGASGGV) and lysine 649. The active-site Proton acceptor is aspartate 739. Threonine 773 is modified (phosphothreonine). The segment covering 899–908 (ADEDNDDDND) has biased composition (acidic residues). Residues 899-939 (ADEDNDDDNDNEHINKTNNCDDNNDSKETVNLDVTEDDKQK) are disordered. At serine 924 the chain carries Phosphoserine. Phosphothreonine is present on threonine 927.

This sequence belongs to the protein kinase superfamily. STE Ser/Thr protein kinase family. STE20 subfamily. In terms of assembly, interacts with BEM1, CDC42, CLN2, STE4 and the 14-3-3 proteins BMH1 and BMH2. Autophosphorylated and phosphorylated by the CLN2-CDC28 complex in a cell cycle dependent manner. Post-translationally, autophosphorylated on serine residues.

It is found in the cytoplasm. The protein localises to the nucleus. The enzyme catalyses L-seryl-[protein] + ATP = O-phospho-L-seryl-[protein] + ADP + H(+). The catalysed reaction is L-threonyl-[protein] + ATP = O-phospho-L-threonyl-[protein] + ADP + H(+). Its function is as follows. MAP4K component of the MAPK pathway required for the mating pheromone response, haploid invasive growth and diploid pseudohyphal development. Links the pheromone response G-protein beta gamma subunits to downstream signaling components. Needed for mating in haploid cells, induction of a mating-specific gene FUS1, induction of mating-specific morphologies, and pheromone-induced proliferation arrest. Required for the regulation of the actin polarization and bud emergence during cell cycle in G1. Involved in the high osmolarity glycerol (HOG) response. Phosphorylates 'Thr-307' and 'Ser-302' or 'Ser-306' of STE11 and 'Ser-357' of MYO3. Phosphorylates histone H2B to form H2BS10ph during meiosis and H(2)O(2)-induced apoptosis. Its interaction with CDC42 is required for both invasive growth and the formation of pseudohyphae. Its interaction with STE4 is required for the pheromone signaling. The sequence is that of Serine/threonine-protein kinase STE20 (STE20) from Saccharomyces cerevisiae (strain ATCC 204508 / S288c) (Baker's yeast).